The sequence spans 431 residues: Phosphoribosylamine--glycine ligase (431 aa).

The region spanning 108-315 is the ATP-grasp domain; sequence KDFLARHKIP…LVLLIEAALA (208 aa). ATP is bound at residue 134–195; sequence LREKGAPIVI…EEFLDGEEAS (62 aa). Residues Glu-285 and Asn-287 each coordinate Mg(2+).

Belongs to the GARS family. Mg(2+) is required as a cofactor. The cofactor is Mn(2+).

It catalyses the reaction 5-phospho-beta-D-ribosylamine + glycine + ATP = N(1)-(5-phospho-beta-D-ribosyl)glycinamide + ADP + phosphate + H(+). It participates in purine metabolism; IMP biosynthesis via de novo pathway; N(1)-(5-phospho-D-ribosyl)glycinamide from 5-phospho-alpha-D-ribose 1-diphosphate: step 2/2. This is Phosphoribosylamine--glycine ligase from Pseudomonas syringae pv. tomato (strain ATCC BAA-871 / DC3000).